Here is a 118-residue protein sequence, read N- to C-terminus: Ribonuclease P protein component (118 aa).

The protein belongs to the RnpA family. In terms of assembly, consists of a catalytic RNA component (M1 or rnpB) and a protein subunit.

The catalysed reaction is Endonucleolytic cleavage of RNA, removing 5'-extranucleotides from tRNA precursor.. Functionally, RNaseP catalyzes the removal of the 5'-leader sequence from pre-tRNA to produce the mature 5'-terminus. It can also cleave other RNA substrates such as 4.5S RNA. The protein component plays an auxiliary but essential role in vivo by binding to the 5'-leader sequence and broadening the substrate specificity of the ribozyme. The polypeptide is Ribonuclease P protein component (Rickettsia conorii (strain ATCC VR-613 / Malish 7)).